The following is a 144-amino-acid chain: MAREFSRTRRVGQQIQREIALILQREVKDPRIGMVTVSDVEVSRDLNYAKVYVTFLQLENDAERIKEGLKALTEAAGYIRSLLGSAMRLRVVPELRFFYDQTLVEGMRLSNLVTNTIREDKRRMAESGREEDDAAPDETTEDNA.

Positions 120–144 (DKRRMAESGREEDDAAPDETTEDNA) are disordered. A compositionally biased stretch (acidic residues) spans 129–144 (REEDDAAPDETTEDNA).

The protein belongs to the RbfA family. As to quaternary structure, monomer. Binds 30S ribosomal subunits, but not 50S ribosomal subunits or 70S ribosomes.

Its subcellular location is the cytoplasm. Its function is as follows. One of several proteins that assist in the late maturation steps of the functional core of the 30S ribosomal subunit. Associates with free 30S ribosomal subunits (but not with 30S subunits that are part of 70S ribosomes or polysomes). Required for efficient processing of 16S rRNA. May interact with the 5'-terminal helix region of 16S rRNA. This chain is Ribosome-binding factor A, found in Aeromonas hydrophila subsp. hydrophila (strain ATCC 7966 / DSM 30187 / BCRC 13018 / CCUG 14551 / JCM 1027 / KCTC 2358 / NCIMB 9240 / NCTC 8049).